A 165-amino-acid polypeptide reads, in one-letter code: Phosphopantetheine adenylyltransferase (165 aa).

Ser9 lines the substrate pocket. Residues 9-10 and His17 contribute to the ATP site; that span reads SF. Positions 41, 75, and 89 each coordinate substrate. Residues 90–92, Glu100, and 125–131 each bind ATP; these read GVR and YLFVRSD.

It belongs to the bacterial CoaD family. Homohexamer. Requires Mg(2+) as cofactor.

It localises to the cytoplasm. It carries out the reaction (R)-4'-phosphopantetheine + ATP + H(+) = 3'-dephospho-CoA + diphosphate. It functions in the pathway cofactor biosynthesis; coenzyme A biosynthesis; CoA from (R)-pantothenate: step 4/5. Reversibly transfers an adenylyl group from ATP to 4'-phosphopantetheine, yielding dephospho-CoA (dPCoA) and pyrophosphate. This Borrelia duttonii (strain Ly) protein is Phosphopantetheine adenylyltransferase.